A 211-amino-acid chain; its full sequence is Large ribosomal subunit protein bL25 (211 aa).

The protein belongs to the bacterial ribosomal protein bL25 family. CTC subfamily. Part of the 50S ribosomal subunit; part of the 5S rRNA/L5/L18/L25 subcomplex. Contacts the 5S rRNA. Binds to the 5S rRNA independently of L5 and L18.

In terms of biological role, this is one of the proteins that binds to the 5S RNA in the ribosome where it forms part of the central protuberance. The protein is Large ribosomal subunit protein bL25 of Methylobacterium nodulans (strain LMG 21967 / CNCM I-2342 / ORS 2060).